The following is a 312-amino-acid chain: Olfactory receptor 51I2 (312 aa).

At 1–25 (MGLFNVTHPAFFLLTGIPGLESSHS) the chain is on the extracellular side. N5 carries N-linked (GlcNAc...) asparagine glycosylation. A helical membrane pass occupies residues 26 to 46 (WLSGPLCVMYAVALGGNTVIL). At 47 to 54 (QAVRVEPS) the chain is on the cytoplasmic side. The helical transmembrane segment at 55 to 75 (LHEPMYYFLSMLSFSDVAISM) threads the bilayer. At 76-99 (ATLPTVLRTFCLNARNITFDACLI) the chain is on the extracellular side. C97 and C189 are joined by a disulfide. A helical transmembrane segment spans residues 100–120 (QMFLIHFFSMMESGILLAMSF). Topologically, residues 121–139 (DRYVAICDPLRYATVLTTE) are cytoplasmic. Residues 140 to 160 (VIAAMGLGAAARSFITLFPLP) form a helical membrane-spanning segment. Over 161-196 (FLIKRLPICRSNVLSHSYCLHPDMMRLACADISINS) the chain is Extracellular. The helical transmembrane segment at 197–217 (IYGLFVLVSTFGMDLFFIFLS) threads the bilayer. Topologically, residues 218–237 (YVLILRSVMATASREERLKA) are cytoplasmic. The chain crosses the membrane as a helical span at residues 238–258 (LNTCVSHILAVLAFYVPMIGV). At 259-273 (STVHRFGKHVPCYIH) the chain is on the extracellular side. The chain crosses the membrane as a helical span at residues 274–294 (VLMSNVYLFVPPVLNPLIYSA). The Cytoplasmic portion of the chain corresponds to 295 to 312 (KTKEIRRAIFRMFHHIKI).

Belongs to the G-protein coupled receptor 1 family.

The protein resides in the cell membrane. Its function is as follows. Odorant receptor. This is Olfactory receptor 51I2 (OR51I2) from Homo sapiens (Human).